Here is a 129-residue protein sequence, read N- to C-terminus: Putative zinc finger protein 702 (129 aa).

3 C2H2-type zinc fingers span residues 34–56, 62–84, and 90–112; these read YKCD…HRCH, YKCN…KAIH, and HKCN…HRLH.

Belongs to the krueppel C2H2-type zinc-finger protein family.

The protein resides in the nucleus. Its function is as follows. May be involved in transcriptional regulation. This chain is Putative zinc finger protein 702 (ZNF702P), found in Homo sapiens (Human).